The primary structure comprises 163 residues: Peptidyl-prolyl cis-trans isomerase (163 aa).

A PPIase cyclophilin-type domain is found at 5 to 162; it reads YFDVSSNGKP…SVLKIEDCGT (158 aa).

It belongs to the cyclophilin-type PPIase family. PPIase A subfamily.

The protein resides in the cytoplasm. The enzyme catalyses [protein]-peptidylproline (omega=180) = [protein]-peptidylproline (omega=0). Binds cyclosporin A (CsA). CsA mediates some of its effects via an inhibitory action on PPIase. PPIases accelerate the folding of proteins. It catalyzes the cis-trans isomerization of proline imidic peptide bonds in oligopeptides. This is Peptidyl-prolyl cis-trans isomerase (PIG28) from Uromyces fabae (Rust fungus).